A 504-amino-acid polypeptide reads, in one-letter code: Beta-xylosidase (504 aa).

Residue E160 is the Proton donor of the active site. E280 acts as the Nucleophile in catalysis.

This sequence belongs to the glycosyl hydrolase 39 family.

The catalysed reaction is Hydrolysis of (1-&gt;4)-beta-D-xylans, to remove successive D-xylose residues from the non-reducing termini.. This Geobacillus stearothermophilus (Bacillus stearothermophilus) protein is Beta-xylosidase (xynB).